Consider the following 420-residue polypeptide: MDKFRVQGPTCLSGEVTISGAKNAALPILFAAILAEEPVELTNVPKLKDIDTTIKLLNRLGTKVERNGSVFVDARHINEFCAPYELVKTMRASIWALGPLVARFGRGQVSLPGGCAIGARPVDLHITGLEQLGAEITLDEGYVKARVDGRLKGAHIVMDKVSVGATITIMTAAVLAEGKTIIENAAREPEIEDTANFLNTLGAKISGAGTDSITIEGVERLGGGTYQILPDRIETGTFLVAAAVSRGRVVCRNAKPDTLDAVLAKLREAGADIETGEDWISLDMHGKRPKAVTLRTAPHPGFPTDMQAQFSLLNLVADGAGMITETIFENRFMHIPELIRMGAHAEIESNTVLCHGVDKLSGAQVMATDLRASASLVLAGCIAEGTTIVDRIYHIDRGYENIEAKLQGLGAKIERLHSND.

Residue 22-23 (KN) coordinates phosphoenolpyruvate. Arg-91 provides a ligand contact to UDP-N-acetyl-alpha-D-glucosamine. The active-site Proton donor is the Cys-115. Cys-115 carries the 2-(S-cysteinyl)pyruvic acid O-phosphothioketal modification. UDP-N-acetyl-alpha-D-glucosamine contacts are provided by residues 120-124 (RPVDL), 160-163 (KVSV), Asp-305, and Ile-327.

The protein belongs to the EPSP synthase family. MurA subfamily.

The protein localises to the cytoplasm. It catalyses the reaction phosphoenolpyruvate + UDP-N-acetyl-alpha-D-glucosamine = UDP-N-acetyl-3-O-(1-carboxyvinyl)-alpha-D-glucosamine + phosphate. It participates in cell wall biogenesis; peptidoglycan biosynthesis. Its function is as follows. Cell wall formation. Adds enolpyruvyl to UDP-N-acetylglucosamine. The chain is UDP-N-acetylglucosamine 1-carboxyvinyltransferase from Proteus mirabilis (strain HI4320).